A 464-amino-acid polypeptide reads, in one-letter code: Soluble pyridine nucleotide transhydrogenase (464 aa).

Position 35-44 (35-44 (DDRRQVGGNC)) interacts with FAD.

It belongs to the class-I pyridine nucleotide-disulfide oxidoreductase family. Requires FAD as cofactor.

It is found in the cytoplasm. The enzyme catalyses NAD(+) + NADPH = NADH + NADP(+). In terms of biological role, conversion of NADPH, generated by peripheral catabolic pathways, to NADH, which can enter the respiratory chain for energy generation. The chain is Soluble pyridine nucleotide transhydrogenase from Pseudomonas putida (strain ATCC 47054 / DSM 6125 / CFBP 8728 / NCIMB 11950 / KT2440).